The chain runs to 296 residues: Sulfotransferase 1C2 (296 aa).

Position 49–54 (49–54 (KSGTTW)) interacts with 3'-phosphoadenylyl sulfate. Substrate is bound at residue 107–109 (RTH). Residue His-109 is the Proton acceptor of the active site. Residues Arg-131, Ser-139, Tyr-194, and 228–233 (TSFEKM) contribute to the 3'-phosphoadenylyl sulfate site. Ser-139 carries the post-translational modification Phosphoserine. Phosphoserine is present on Ser-254. 256-260 (FMRKG) contacts 3'-phosphoadenylyl sulfate.

Belongs to the sulfotransferase 1 family. As to expression, found in gastrointestinal tract tissues, liver and kidney.

The protein localises to the cytoplasm. It is found in the lysosome. Its subcellular location is the mitochondrion. The enzyme catalyses a phenol + 3'-phosphoadenylyl sulfate = an aryl sulfate + adenosine 3',5'-bisphosphate + H(+). It carries out the reaction cholesterol + 3'-phosphoadenylyl sulfate = cholesterol sulfate + adenosine 3',5'-bisphosphate + H(+). Sulfotransferase that utilizes 3'-phospho-5'-adenylyl sulfate (PAPS) to catalyze the sulfate conjugation of phenolic compounds. Does not transfer sulfate to steroids, dopamine, acetaminophen, or alpha-naphthol. Except in mitochondria, where it can add sulfate to cholesterol producing cholesterol sulfate, which alters mitochondrial membrane organization, and impacts protein complex mobility increasing state-III respiration, thereby modulating mitochondrial respiration. Catalyzes the sulfation of the carcinogenic N-hydroxy-2-acetylaminofluorene leading to highly reactive intermediates capable of forming DNA adducts, potentially resulting in mutagenesis. The protein is Sulfotransferase 1C2 (SULT1C2) of Oryctolagus cuniculus (Rabbit).